The primary structure comprises 142 residues: Large ribosomal subunit protein uL13 (142 aa).

This sequence belongs to the universal ribosomal protein uL13 family. As to quaternary structure, part of the 50S ribosomal subunit.

Its function is as follows. This protein is one of the early assembly proteins of the 50S ribosomal subunit, although it is not seen to bind rRNA by itself. It is important during the early stages of 50S assembly. The polypeptide is Large ribosomal subunit protein uL13 (Vibrio vulnificus (strain CMCP6)).